The following is a 1732-amino-acid chain: Polycystin-1-like protein 3 (1732 aa).

An N-terminal signal peptide occupies residues 1–23; it reads MFFKGGSWLWLYIRTSIILGSEL. Residues 24–697 are Extracellular-facing; that stretch reads NSPAPHGQNN…IKLFLRVTNN (674 aa). One can recognise a C-type lectin domain in the interval 30-138; that stretch reads GQNNCYQLNR…CLLKYYFICQ (109 aa). Cystine bridges form between cysteine 51–cysteine 137 and cysteine 112–cysteine 129. Asparagine 286, asparagine 363, asparagine 515, asparagine 537, and asparagine 575 each carry an N-linked (GlcNAc...) asparagine glycan. Residues 523-685 enclose the GAIN-B domain; sequence TSLNMSTHQL…FVVPRTVNVE (163 aa). 2 disulfide bridges follow: cysteine 635/cysteine 663 and cysteine 650/cysteine 665. The segment at 635–685 is GPS; that stretch reads CYYWEIHNQTWSSAGCQVGPQSTILRTQCLCNHLTFFASDFFVVPRTVNVE. The chain crosses the membrane as a helical span at residues 698–718; sequence PVGVSLLASLLGFYVITVVWA. Topologically, residues 719–905 are cytoplasmic; the sequence is RKKDQADMQK…PWNQFTRVQR (187 aa). One can recognise a PLAT domain in the interval 743 to 860; the sequence is FHYLIQVYTG…GDCELDRVFI (118 aa). Residues 906-926 form a helical membrane-spanning segment; it reads LSCCMTLLLCNMVINVMFWKI. The Extracellular portion of the chain corresponds to 927–939; it reads NSTTAKRDEQMRP. A helical transmembrane segment spans residues 940–960; the sequence is FAVAWSELLVSIHTAVILFPI. Over 961–1154 the chain is Cytoplasmic; that stretch reads NLVIGRLFPL…ISNGLSKWLT (194 aa). Residues 1155–1175 traverse the membrane as a helical segment; that stretch reads SVCWLLLGFTSLASAFFTALY. Topologically, residues 1176–1198 are extracellular; the sequence is SLELSKDQATSWMISIILSVLQN. Residues 1199 to 1219 form a helical membrane-spanning segment; that stretch reads IFISQPVKVVFFTFLYSLMMS. The Cytoplasmic segment spans residues 1220–1289; the sequence is RMPRLNKENE…KLTGDILVQI (70 aa). Residues 1290-1300 traverse the membrane as a helical segment; sequence LFLTLLMTAIY. At 1301–1461 the chain is on the extracellular side; the sequence is SAKNSNRFYL…SFTSLQMSKK (161 aa). The helical transmembrane segment at 1462-1491 threads the bilayer; that stretch reads GCVWSIISQVIYYLLVCYYAFIQGCQLKQQ. Topologically, residues 1492–1500 are cytoplasmic; the sequence is KWRFFTGKR. A helical membrane pass occupies residues 1501–1519; it reads NILDTSIILISFILLGLDM. Topologically, residues 1520-1550 are extracellular; the sequence is KSISLHKKNMARYRDDQDRFISFYEAVKVNS. The helical transmembrane segment at 1551-1572 threads the bilayer; that stretch reads AATHLVGFPVLLATVQLWNLLR. Residues 1573 to 1589 are Cytoplasmic-facing; the sequence is HSPRLRVISRTLSRAWD. A helical membrane pass occupies residues 1590–1614; it reads EVVGFLLIILILLTGYAIAFNLLFG. The channel pore-region stretch occupies residues 1613–1651; it reads FGCSISDYRTFFSSAVTVVGLLMGISHQEEVFALDPVLG. The Extracellular segment spans residues 1615–1647; that stretch reads CSISDYRTFFSSAVTVVGLLMGISHQEEVFALD. Residues 1648–1667 traverse the membrane as a helical segment; sequence PVLGTFLILTSVILMVLVVI. Topologically, residues 1668 to 1732 are cytoplasmic; the sequence is NLFVSAILMA…SDTEVLDELP (65 aa).

This sequence belongs to the polycystin family. Heterotetramer with PKD2L1, composed of 3 subunit of PKD2L1 and 1 subunit of PKD1L3. Post-translationally, autoproteolytically processed at the GPS region of the GAIN-B domain; this cleavage modulates receptor activity. In terms of tissue distribution, highly expressed in placenta, weakly in heart and lung.

Its subcellular location is the cell membrane. It carries out the reaction Ca(2+)(in) = Ca(2+)(out). The enzyme catalyses Na(+)(in) = Na(+)(out). It catalyses the reaction K(+)(in) = K(+)(out). The catalysed reaction is Mg(2+)(in) = Mg(2+)(out). With respect to regulation, the non-selective cation channel is gated following an off-response property by acid: gated open after the removal of acid stimulus, but not during acid application. Regulation of non-selective cation channel activity by external Ca(2+) is bimodal, first sensitizing and subsequently inactivating the current. Pore-forming subunit of a heterotetrameric, non-selective cation channel that is permeable to Ca(2+). Also shows permeability towards NA(1+), K(+) and Mg(2+). Heterotetrameric complex channel is activated by external low pH and Ca(2+), but opens only when the extracellular pH rises again and after the removal of acid stimulus. May act as a sour taste receptor in gustatory cells; however, its contribution to sour taste perception is unclear in vivo and may be indirect. This chain is Polycystin-1-like protein 3, found in Homo sapiens (Human).